Here is a 475-residue protein sequence, read N- to C-terminus: Aspartyl/glutamyl-tRNA(Asn/Gln) amidotransferase subunit B (475 aa).

It belongs to the GatB/GatE family. GatB subfamily. As to quaternary structure, heterotrimer of A, B and C subunits.

The enzyme catalyses L-glutamyl-tRNA(Gln) + L-glutamine + ATP + H2O = L-glutaminyl-tRNA(Gln) + L-glutamate + ADP + phosphate + H(+). The catalysed reaction is L-aspartyl-tRNA(Asn) + L-glutamine + ATP + H2O = L-asparaginyl-tRNA(Asn) + L-glutamate + ADP + phosphate + 2 H(+). Allows the formation of correctly charged Asn-tRNA(Asn) or Gln-tRNA(Gln) through the transamidation of misacylated Asp-tRNA(Asn) or Glu-tRNA(Gln) in organisms which lack either or both of asparaginyl-tRNA or glutaminyl-tRNA synthetases. The reaction takes place in the presence of glutamine and ATP through an activated phospho-Asp-tRNA(Asn) or phospho-Glu-tRNA(Gln). The polypeptide is Aspartyl/glutamyl-tRNA(Asn/Gln) amidotransferase subunit B (Staphylococcus haemolyticus (strain JCSC1435)).